Reading from the N-terminus, the 130-residue chain is Small ribosomal subunit protein uS8 (130 aa).

The protein belongs to the universal ribosomal protein uS8 family. Part of the 30S ribosomal subunit.

One of the primary rRNA binding proteins, it binds directly to 16S rRNA central domain where it helps coordinate assembly of the platform of the 30S subunit. The chain is Small ribosomal subunit protein uS8 from Methanococcus aeolicus (strain ATCC BAA-1280 / DSM 17508 / OCM 812 / Nankai-3).